Reading from the N-terminus, the 1191-residue chain is Roquin-2 (1191 aa).

Residues Cys-14, Cys-17, Cys-33, His-35, Cys-38, Cys-50, and Asp-53 each contribute to the Zn(2+) site. The segment at 14–54 (CPICYNEFDENVHKPISLGCSHTVCKTCLNKLHRKACPFDQ) adopts an RING-type; degenerate zinc-finger fold. The interval 91-170 (ENKHYEVAKK…RTVTELILQH (80 aa)) is HEPN-N. The ROQ stretch occupies residues 171–325 (QNPQQLSANL…SIIDKLQSPE (155 aa)). Residues 326–396 (SFAKSVQELT…GLVDFIQNYS (71 aa)) form an HEPN-C region. A C3H1-type zinc finger spans residues 410-438 (KYKTSMCRDLRQQGGCPRGTNCTFAHSQE). 2 disordered regions span residues 528–576 (GANG…NSVP) and 644–680 (ESSL…PQPY). The span at 530–546 (NGQNAAGPSADSVTENK) shows a compositional bias: polar residues. Residue Ser-549 is modified to Phosphoserine. The span at 554–576 (PVSNVAATSAGPSNVGTELNSVP) shows a compositional bias: polar residues. Phosphoserine is present on residues Ser-808, Ser-983, and Ser-1119.

Interacts with EDC4. Interacts with CCR4-NOT deadenylase complex. Interacts with MAP3K5; the interaction is probably stimulus-dependent. In terms of processing, proteolytically cleaved after Arg-509 and Arg-585 by MALT1 in activated CD4(+) T cells; cleavage at Arg-509 and Arg-585 is critical for promoting RC3H1 degradation in response to T-cell receptor (TCR) stimulation, and hence is necessary for prolonging the stability of a set of mRNAs controlling Th17 cell differentiation. As to expression, expressed in spleen, testis, ovary and small intestine.

It is found in the cytoplasm. Its subcellular location is the P-body. It carries out the reaction S-ubiquitinyl-[E2 ubiquitin-conjugating enzyme]-L-cysteine + [acceptor protein]-L-lysine = [E2 ubiquitin-conjugating enzyme]-L-cysteine + N(6)-ubiquitinyl-[acceptor protein]-L-lysine.. The protein operates within protein modification; protein ubiquitination. Binding to dsRNA, but not CDE RNA, crosstalks with the E3 ubiquitin ligase activity and may inhibit ubiquitination. In terms of biological role, post-transcriptional repressor of mRNAs containing a conserved stem loop motif, called constitutive decay element (CDE), which is often located in the 3'-UTR, as in HMGXB3, ICOS, IER3, NFKBID, NFKBIZ, PPP1R10, TNF and in many more mRNAs. Binds to CDE and promotes mRNA deadenylation and degradation. This process does not involve miRNAs. In follicular helper T (Tfh) cells, represses of ICOS and TNFRSF4 expression, thus preventing spontaneous Tfh cell differentiation, germinal center B-cell differentiation in the absence of immunization and autoimmunity. In resting or LPS-stimulated macrophages, controls inflammation by suppressing TNF expression. Also recognizes CDE in its own mRNA and in that of paralogous RC3H1, possibly leading to feedback loop regulation. miRNA-binding protein that regulates microRNA homeostasis. Enhances DICER-mediated processing of pre-MIR146a but reduces mature MIR146a levels through an increase of 3' end uridylation. Both inhibits ICOS mRNA expression and they may act together to exert the suppression. Acts as a ubiquitin E3 ligase. Pairs with E2 enzymes UBE2B, UBE2D2, UBE2E2, UBE2E3, UBE2G2, UBE2K and UBE2Q2 and produces polyubiquitin chains. Shows the strongest activity when paired with UBE2N:UBE2V1 or UBE2N:UBE2V2 E2 complexes and generate both short and long polyubiquitin chains. Involved in the ubiquitination of MAP3K5. Able to interact with double-stranded RNA (dsRNA). The polypeptide is Roquin-2 (RC3H2) (Homo sapiens (Human)).